The following is a 485-amino-acid chain: Cytochrome P450 monooxygenase tndB (485 aa).

Residues 20 to 40 (VYGISAVIAVGLAIYSASLAI) form a helical membrane-spanning segment. Residue Cys-481 coordinates heme.

It belongs to the cytochrome P450 family. Requires heme as cofactor.

It localises to the membrane. Its pathway is secondary metabolite biosynthesis; terpenoid biosynthesis. Its function is as follows. Cytochrome P450 monooxygenase; part of the gene cluster that mediates the biosynthesis of talaronoid C, a fusicoccane diterpenoid with an unprecedented tricyclic 5/8/6 ring system. The first step in the pathway is performed by the fusicoccadiene synthase tndC that possesses both prenyl transferase and terpene cyclase activity, converting isopentenyl diphosphate and dimethylallyl diphosphate into geranylgeranyl diphosphate (GGDP) and further converting GGDP into talarodiene, a precursor for talaronoid C. The remaining enzymes from the cluster include the cytochrome P450 monooxygenase tndB, the aldehyde reductase tndE and the alcohol dehydrogenase tndF that are involved in the conversion of talarodiene into talaronoid C. This chain is Cytochrome P450 monooxygenase tndB, found in Aspergillus flavipes.